The chain runs to 180 residues: Stathmin-3 (180 aa).

S-palmitoyl cysteine attachment occurs at residues Cys22 and Cys24. The region spanning 38–180 (GDMEVKQLDK…NKEQREEMSG (143 aa)) is the SLD domain. Phosphoserine occurs at positions 50, 60, 65, 68, 72, 73, and 81. The disordered stretch occupies residues 59–82 (KSPSDLSPESPMLSSPPKKKDTSL). Positions 60 to 74 (SPSDLSPESPMLSSP) are enriched in low complexity. The stretch at 75–179 (PKKKDTSLEE…RNKEQREEMS (105 aa)) forms a coiled coil.

Belongs to the stathmin family. In terms of assembly, interacts with STAT3. Interacts with CLU (secreted form); this interaction may act as an important modulator during neuronal differentiation. In terms of processing, N-terminal palmitoylation promotes specific anchoring to the cytosolic leaflet of Golgi membranes and subsequent vesicular trafficking along dendrites and axons. Neuronal Stathmins are substrates for palmitoyltransferases ZDHHC3, ZDHHC7 and ZDHHC15. In terms of tissue distribution, neuron specific.

It localises to the golgi apparatus. The protein localises to the cell projection. Its subcellular location is the growth cone. The protein resides in the axon. It is found in the cytoplasm. It localises to the cytosol. Exhibits microtubule-destabilizing activity, which is antagonized by STAT3. The polypeptide is Stathmin-3 (STMN3) (Homo sapiens (Human)).